Reading from the N-terminus, the 90-residue chain is Secretory calcium-binding phosphoprotein proline-glutamine-rich 1 (90 aa).

An N-terminal signal peptide occupies residues 1 to 15; that stretch reads MQLFLLAALLSAAAA.

In terms of tissue distribution, expressed in enamel organ.

Its subcellular location is the secreted. Functionally, tooth-associated epithelia protein that may participate in structuring the basal lamina at cell-tooth interface. This is Secretory calcium-binding phosphoprotein proline-glutamine-rich 1 from Mus musculus (Mouse).